A 254-amino-acid polypeptide reads, in one-letter code: UPF0246 protein BDI_1226 (254 aa).

It belongs to the UPF0246 family.

The sequence is that of UPF0246 protein BDI_1226 from Parabacteroides distasonis (strain ATCC 8503 / DSM 20701 / CIP 104284 / JCM 5825 / NCTC 11152).